Here is a 318-residue protein sequence, read N- to C-terminus: Putative HTH-type transcriptional regulatory protein TK0539 (318 aa).

In terms of domain architecture, HTH cro/C1-type spans 131-189; sequence LRELREKHGYSVNELAQLLGVSRKSLLNYERGEQAVSLDVAIQLEEIFDEALAEPIDIL. A DNA-binding region (H-T-H motif) is located at residues 142-161; it reads VNELAQLLGVSRKSLLNYER.

This chain is Putative HTH-type transcriptional regulatory protein TK0539, found in Thermococcus kodakarensis (strain ATCC BAA-918 / JCM 12380 / KOD1) (Pyrococcus kodakaraensis (strain KOD1)).